The chain runs to 215 residues: LexA repressor (215 aa).

The segment at residues 28-48 (RAEIAAELGFSSPNAAEEHLR) is a DNA-binding region (H-T-H motif). Residues S133 and K170 each act as for autocatalytic cleavage activity in the active site.

It belongs to the peptidase S24 family. Homodimer.

The enzyme catalyses Hydrolysis of Ala-|-Gly bond in repressor LexA.. Represses a number of genes involved in the response to DNA damage (SOS response), including recA and lexA. In the presence of single-stranded DNA, RecA interacts with LexA causing an autocatalytic cleavage which disrupts the DNA-binding part of LexA, leading to derepression of the SOS regulon and eventually DNA repair. The chain is LexA repressor from Burkholderia ambifaria (strain MC40-6).